The sequence spans 191 residues: UPF0312 protein Shewana3_1179 (191 aa).

Residues 1–22 (MKKQLLAALIGGSLLAPMAASA) form the signal peptide.

This sequence belongs to the UPF0312 family. Type 1 subfamily.

It localises to the periplasm. This is UPF0312 protein Shewana3_1179 from Shewanella sp. (strain ANA-3).